The chain runs to 365 residues: Peptide chain release factor 2 (365 aa).

N5-methylglutamine is present on glutamine 252.

It belongs to the prokaryotic/mitochondrial release factor family. Post-translationally, methylated by PrmC. Methylation increases the termination efficiency of RF2.

The protein resides in the cytoplasm. Its function is as follows. Peptide chain release factor 2 directs the termination of translation in response to the peptide chain termination codons UGA and UAA. The chain is Peptide chain release factor 2 from Aeromonas hydrophila subsp. hydrophila (strain ATCC 7966 / DSM 30187 / BCRC 13018 / CCUG 14551 / JCM 1027 / KCTC 2358 / NCIMB 9240 / NCTC 8049).